The primary structure comprises 130 residues: Fumarate reductase subunit D (130 aa).

Helical transmembrane passes span 35 to 55, 67 to 87, and 110 to 130; these read FAMITPITVLVLGILAPLGVI, SFATSIIGALFIIGTLALPMW, and IACYGFATIISALAVVFIFMI.

Belongs to the FrdD family. In terms of assembly, part of an enzyme complex containing four subunits: a flavoprotein (FrdA), an iron-sulfur protein (FrdB), and two hydrophobic anchor proteins (FrdC and FrdD).

It is found in the cell inner membrane. Anchors the catalytic components of the fumarate reductase complex to the cell membrane, binds quinones. This is Fumarate reductase subunit D from Vibrio cholerae serotype O1 (strain M66-2).